The following is a 249-amino-acid chain: Ribonuclease 3 (249 aa).

Positions Ser-29 to Arg-151 constitute an RNase III domain. Mg(2+) is bound at residue Glu-65. Asp-69 is an active-site residue. The Mg(2+) site is built by Glu-137 and Glu-140. The active site involves Glu-140. In terms of domain architecture, DRBM spans Asn-179–Asn-249. Positions Gly-227–Asn-249 are disordered. Positions Gln-236 to Asn-249 are enriched in basic and acidic residues.

Belongs to the ribonuclease III family. Homodimer. Requires Mg(2+) as cofactor.

Its subcellular location is the cytoplasm. It carries out the reaction Endonucleolytic cleavage to 5'-phosphomonoester.. Functionally, digests double-stranded RNA. Involved in the processing of primary rRNA transcript to yield the immediate precursors to the large and small rRNAs (23S and 16S). Processes some mRNAs, and tRNAs when they are encoded in the rRNA operon. Processes pre-crRNA and tracrRNA of type II CRISPR loci if present in the organism. The sequence is that of Ribonuclease 3 from Prochlorococcus marinus (strain SARG / CCMP1375 / SS120).